Reading from the N-terminus, the 260-residue chain is Alpha-acetolactate decarboxylase (260 aa).

Belongs to the alpha-acetolactate decarboxylase family.

It carries out the reaction (2S)-2-acetolactate + H(+) = (R)-acetoin + CO2. The protein operates within polyol metabolism; (R,R)-butane-2,3-diol biosynthesis; (R,R)-butane-2,3-diol from pyruvate: step 2/3. Converts acetolactate into acetoin, which can be excreted by the cells. This may be a mechanism for controlling the internal pH of cells in the stationary stage. The polypeptide is Alpha-acetolactate decarboxylase (budA) (Klebsiella aerogenes (Enterobacter aerogenes)).